A 112-amino-acid polypeptide reads, in one-letter code: Nitrogen regulatory protein GlnK2 (112 aa).

Residues threonine 29, glutamine 38–glutamine 39, valine 64, and glycine 87–lysine 90 contribute to the ADP site. Residues threonine 29, glutamine 38 to glutamine 39, valine 64, glycine 87 to lysine 90, and arginine 101 to arginine 103 each bind ATP.

This sequence belongs to the P(II) protein family. As to quaternary structure, homotrimer. Interacts and forms a complex with Amt2.

It localises to the cytoplasm. Binding of adenosine nucleotides results in distinct, cooperative behavior for ATP and ADP. GlnK2 is completely insensitive to 2-oxoglutarate at a low level of intracellular nitrogen. Functionally, involved in the regulation of nitrogen metabolism. Regulates the activity of its targets by protein-protein interaction in response to the nitrogen status of the cell. Regulates the activity of the ammonia channel Amt2 via direct interaction. The polypeptide is Nitrogen regulatory protein GlnK2 (Archaeoglobus fulgidus (strain ATCC 49558 / DSM 4304 / JCM 9628 / NBRC 100126 / VC-16)).